The primary structure comprises 2278 residues: Protein Ycf2 (2278 aa).

1632–1639 (GSIGTGRS) contributes to the ATP binding site.

This sequence belongs to the Ycf2 family.

It localises to the plastid. It is found in the chloroplast stroma. Functionally, probable ATPase of unknown function. Its presence in a non-photosynthetic plant (Epifagus virginiana) and experiments in tobacco indicate that it has an essential function which is probably not related to photosynthesis. The sequence is that of Protein Ycf2 from Solanum bulbocastanum (Wild potato).